The following is a 143-amino-acid chain: Histone H2B.2, sperm (143 aa).

The disordered stretch occupies residues 1 to 52 (MPRSPSKSSPRKGSPRKGSPRKGSPKRGGKGAKRAGKGGRRRNVVKRRRRRR). 5 consecutive short sequence motifs (SPKK motif) follow at residues 4–7 (SPSK), 9–12 (SPRK), 14–17 (SPRK), 19–22 (SPRK), and 24–27 (SPKR). The span at 9–52 (SPRKGSPRKGSPRKGSPKRGGKGAKRAGKGGRRRNVVKRRRRRR) shows a compositional bias: basic residues. 3 positions are modified to phosphoserine: serine 14, serine 19, and serine 24. A glycan (O-linked (GlcNAc) serine) is linked at serine 130. Lysine 138 participates in a covalent cross-link: Glycyl lysine isopeptide (Lys-Gly) (interchain with G-Cter in ubiquitin).

This sequence belongs to the histone H2B family. As to quaternary structure, the nucleosome is a histone octamer containing two molecules each of H2A, H2B, H3 and H4 assembled in one H3-H4 heterotetramer and two H2A-H2B heterodimers. The octamer wraps approximately 147 bp of DNA. In terms of processing, monoubiquitination of Lys-138 gives a specific tag for epigenetic transcriptional activation and is also prerequisite for histone H3 'Lys-4' and 'Lys-79' methylation. Post-translationally, phosphorylated on SPKK motifs 3, 4 and 5; which may regulate DNA binding. Dephosphorylated during maturation of spermatids to mature sperm and rephosphorylated at fertilization. GlcNAcylation at Ser-130 promotes monoubiquitination of Lys-138. It fluctuates in response to extracellular glucose, and associates with transcribed genes. Testis-specific.

The protein localises to the nucleus. The protein resides in the chromosome. Functionally, core component of nucleosome. Nucleosomes wrap and compact DNA into chromatin, limiting DNA accessibility to the cellular machineries which require DNA as a template. Histones thereby play a central role in transcription regulation, DNA repair, DNA replication and chromosomal stability. DNA accessibility is regulated via a complex set of post-translational modifications of histones, also called histone code, and nucleosome remodeling. The chain is Histone H2B.2, sperm from Lytechinus pictus (Painted sea urchin).